A 404-amino-acid polypeptide reads, in one-letter code: Acetate kinase (404 aa).

Asn9 contributes to the Mg(2+) binding site. Lys16 is a binding site for ATP. Arg100 is a binding site for substrate. Asp157 acts as the Proton donor/acceptor in catalysis. Residues 215 to 219, 290 to 292, and 335 to 339 each bind ATP; these read HLGNG, DMR, and GIGEN. Mg(2+) is bound at residue Glu386.

Belongs to the acetokinase family. Homodimer. It depends on Mg(2+) as a cofactor. Requires Mn(2+) as cofactor.

The protein resides in the cytoplasm. The enzyme catalyses acetate + ATP = acetyl phosphate + ADP. It functions in the pathway metabolic intermediate biosynthesis; acetyl-CoA biosynthesis; acetyl-CoA from acetate: step 1/2. Catalyzes the formation of acetyl phosphate from acetate and ATP. Can also catalyze the reverse reaction. This Methylocella silvestris (strain DSM 15510 / CIP 108128 / LMG 27833 / NCIMB 13906 / BL2) protein is Acetate kinase.